The following is a 433-amino-acid chain: Histidinol dehydrogenase (433 aa).

The substrate site is built by Ser236, Gln258, and His261. Zn(2+)-binding residues include Gln258 and His261. Active-site proton acceptor residues include Glu325 and His326. Substrate-binding residues include His326, Asp359, Glu413, and His418. Position 359 (Asp359) interacts with Zn(2+). Residue His418 coordinates Zn(2+).

Belongs to the histidinol dehydrogenase family. The cofactor is Zn(2+).

The catalysed reaction is L-histidinol + 2 NAD(+) + H2O = L-histidine + 2 NADH + 3 H(+). The protein operates within amino-acid biosynthesis; L-histidine biosynthesis; L-histidine from 5-phospho-alpha-D-ribose 1-diphosphate: step 9/9. Functionally, catalyzes the sequential NAD-dependent oxidations of L-histidinol to L-histidinaldehyde and then to L-histidine. The sequence is that of Histidinol dehydrogenase from Pseudoalteromonas translucida (strain TAC 125).